Here is a 945-residue protein sequence, read N- to C-terminus: MGNEAGPIFEESNAEVGTPPADAVHDDFFFDYKNATGYADDCNITGDCNETDDCDITGDCNETDDCNITGDCNETDDCNITGDCNETDDCNITGDCNETDDCNITGDCNETDDCDITGDCNETDDCNITGDCNETDDCNITGDCNETDDCNITGDCNETDDCDITGDCNETDDCNITGDCNETDDCDITGDCNETDDCNITGDCNETDDCNITGDCNETDDCNITGDCNETDDCNITGDCNETDDCNITGDCNETDDCNITGDCNETDDCDITGDCNETDDCNITGDCNETDDCNITGDCNETDDCNITGDCNETDDCNITGDCNETDDCNITGDCNETDDCNITGDCNETDDCDITGDCNETDDCNITGDCNETDDCNITGDCNETDDCNITGDCNETDDCNITGDCNETDDCNITGDCNETDDCDITGDCNETDDCNITGDCNETDDCDITGDCNETDDCNITGDCNETDDCNITGDCNETDDCNITGDCNETDDCNITGDCNETDDCNITGDCNETDDCNITGDCNETDDCDITGDCNETDDCNITGDCNETDDCNITGDCNETDDCNITGDCNETDDCNITGDCNETDDCNITGDCNETDDCDITGDCNETDDCNITGDCNETDDCDITGDCNETDDCNITGDCNETDDCNITGDCNETDDCNITGDCNETDDCNITGDCNETDDCNITGDCNETDDCNITGDCNETDDCDITGDCNETDDCNITGDCNETDDCNITGDCNETDDCNITGDCNETDDCNITGDCNETDDCNITGDCNETDDCDITGDCNETDDCNITGDCNETDDCDITGDCNETDDCNITGDCNETEVSDAADGTDGMFLKSSSSLKLVALCDGCPTEDSPKSSNAKGKGSSVSAGLLLLAGSTFLVLAVGLSAVLFLGRERQNAVVICDNEVMMEEVPGCLSDASFAVPVTQSSDEARP.

The disordered stretch occupies residues 1 to 20 (MGNEAGPIFEESNAEVGTPP). The signal sequence occupies residues 1 to 23 (MGNEAGPIFEESNAEVGTPPADA). Over 24–882 (VHDDFFFDYK…GKGSSVSAGL (859 aa)) the chain is Extracellular. 2 N-linked (GlcNAc...) asparagine glycosylation sites follow: asparagine 34 and asparagine 43. 66 repeat units span residues 40 to 51 (DDCNITGDCNET), 52 to 63 (DDCDITGDCNET), 64 to 75 (DDCNITGDCNET), 76 to 87 (DDCNITGDCNET), 88 to 99 (DDCNITGDCNET), 100 to 111 (DDCNITGDCNET), 112 to 123 (DDCDITGDCNET), 124 to 135 (DDCNITGDCNET), 136 to 147 (DDCNITGDCNET), 148 to 159 (DDCNITGDCNET), 160 to 171 (DDCDITGDCNET), 172 to 183 (DDCNITGDCNET), 184 to 195 (DDCDITGDCNET), 196 to 207 (DDCNITGDCNET), 208 to 219 (DDCNITGDCNET), 220 to 231 (DDCNITGDCNET), 232 to 243 (DDCNITGDCNET), 244 to 255 (DDCNITGDCNET), 256 to 267 (DDCNITGDCNET), 268 to 279 (DDCDITGDCNET), 280 to 291 (DDCNITGDCNET), 292 to 303 (DDCNITGDCNET), 304 to 315 (DDCNITGDCNET), 316 to 327 (DDCNITGDCNET), 328 to 339 (DDCNITGDCNET), 340 to 351 (DDCNITGDCNET), 352 to 363 (DDCDITGDCNET), 364 to 375 (DDCNITGDCNET), 376 to 387 (DDCNITGDCNET), 388 to 399 (DDCNITGDCNET), 400 to 411 (DDCNITGDCNET), 412 to 423 (DDCNITGDCNET), 424 to 435 (DDCDITGDCNET), 436 to 447 (DDCNITGDCNET), 448 to 459 (DDCDITGDCNET), 460 to 471 (DDCNITGDCNET), 472 to 483 (DDCNITGDCNET), 484 to 495 (DDCNITGDCNET), 496 to 507 (DDCNITGDCNET), 508 to 519 (DDCNITGDCNET), 520 to 531 (DDCNITGDCNET), 532 to 543 (DDCDITGDCNET), 544 to 555 (DDCNITGDCNET), 556 to 567 (DDCNITGDCNET), 568 to 579 (DDCNITGDCNET), 580 to 591 (DDCNITGDCNET), 592 to 603 (DDCNITGDCNET), 604 to 615 (DDCDITGDCNET), 616 to 627 (DDCNITGDCNET), 628 to 639 (DDCDITGDCNET), 640 to 651 (DDCNITGDCNET), 652 to 663 (DDCNITGDCNET), 664 to 675 (DDCNITGDCNET), 676 to 687 (DDCNITGDCNET), 688 to 699 (DDCNITGDCNET), 700 to 711 (DDCNITGDCNET), 712 to 723 (DDCDITGDCNET), 724 to 735 (DDCNITGDCNET), 736 to 747 (DDCNITGDCNET), 748 to 759 (DDCNITGDCNET), 760 to 771 (DDCNITGDCNET), 772 to 783 (DDCNITGDCNET), 784 to 795 (DDCDITGDCNET), 796 to 807 (DDCNITGDCNET), 808 to 819 (DDCDITGDCNET), and 820 to 831 (DDCNITGDCNET). Positions 40–831 (DDCNITGDCN…CNITGDCNET (792 aa)) are 66 X 12 AA tandem repeats of D-D-C-[ND]-I-T-G-D-G-N-E-T. N-linked (GlcNAc...) asparagine glycosylation is found at asparagine 67, asparagine 79, asparagine 91, and asparagine 103. N-linked (GlcNAc...) asparagine glycosylation is found at asparagine 127, asparagine 139, and asparagine 151. An N-linked (GlcNAc...) asparagine glycan is attached at asparagine 175. N-linked (GlcNAc...) asparagine glycosylation is found at asparagine 199, asparagine 211, asparagine 223, asparagine 235, asparagine 247, and asparagine 259. 6 N-linked (GlcNAc...) asparagine glycosylation sites follow: asparagine 283, asparagine 295, asparagine 307, asparagine 319, asparagine 331, and asparagine 343. 5 N-linked (GlcNAc...) asparagine glycosylation sites follow: asparagine 367, asparagine 379, asparagine 391, asparagine 403, and asparagine 415. N-linked (GlcNAc...) asparagine glycosylation is present at asparagine 439. 6 N-linked (GlcNAc...) asparagine glycosylation sites follow: asparagine 463, asparagine 475, asparagine 487, asparagine 499, asparagine 511, and asparagine 523. Asparagine 547, asparagine 559, asparagine 571, asparagine 583, and asparagine 595 each carry an N-linked (GlcNAc...) asparagine glycan. N-linked (GlcNAc...) asparagine glycosylation is present at asparagine 619. N-linked (GlcNAc...) asparagine glycosylation is found at asparagine 643, asparagine 655, asparagine 667, asparagine 679, asparagine 691, and asparagine 703. Residues asparagine 727, asparagine 739, asparagine 751, asparagine 763, and asparagine 775 are each glycosylated (N-linked (GlcNAc...) asparagine). N-linked (GlcNAc...) asparagine glycosylation is present at asparagine 799. N-linked (GlcNAc...) asparagine glycosylation is present at asparagine 823. A helical transmembrane segment spans residues 883–903 (LLLAGSTFLVLAVGLSAVLFL). Topologically, residues 904–945 (GRERQNAVVICDNEVMMEEVPGCLSDASFAVPVTQSSDEARP) are cytoplasmic.

It is found in the flagellar pocket. The protein localises to the cell membrane. Supposed to function as cell surface receptor. Possibly involved in receptor-mediated endocytosis. The protein is Cysteine-rich, acidic integral membrane protein (CRAM) of Trypanosoma brucei brucei.